Consider the following 215-residue polypeptide: 3-demethoxyubiquinol 3-hydroxylase (215 aa).

Fe cation-binding residues include glutamate 64, glutamate 94, histidine 97, glutamate 146, glutamate 178, and histidine 181.

Belongs to the COQ7 family. The cofactor is Fe cation.

It is found in the cell membrane. It catalyses the reaction a 5-methoxy-2-methyl-3-(all-trans-polyprenyl)benzene-1,4-diol + AH2 + O2 = a 3-demethylubiquinol + A + H2O. The protein operates within cofactor biosynthesis; ubiquinone biosynthesis. In terms of biological role, catalyzes the hydroxylation of 2-nonaprenyl-3-methyl-6-methoxy-1,4-benzoquinol during ubiquinone biosynthesis. The polypeptide is 3-demethoxyubiquinol 3-hydroxylase (Ectopseudomonas mendocina (strain ymp) (Pseudomonas mendocina)).